A 290-amino-acid chain; its full sequence is Glyceraldehyde-3-phosphate dehydrogenase (290 aa).

The NAD(+) site is built by D13 and R58. Residues 129-131 (SCT), T160, 189-190 (TG), and R212 each bind D-glyceraldehyde 3-phosphate. C130 serves as the catalytic Nucleophile.

It belongs to the glyceraldehyde-3-phosphate dehydrogenase family. In terms of assembly, homotetramer.

Its subcellular location is the cytoplasm. It carries out the reaction D-glyceraldehyde 3-phosphate + phosphate + NAD(+) = (2R)-3-phospho-glyceroyl phosphate + NADH + H(+). It functions in the pathway carbohydrate degradation; glycolysis; pyruvate from D-glyceraldehyde 3-phosphate: step 1/5. The protein is Glyceraldehyde-3-phosphate dehydrogenase (GPD) of Lactarius deterrimus (False saffron milkcap).